The primary structure comprises 553 residues: Arginine--tRNA ligase (553 aa).

The short motif at 130-140 (ANPTGDLHIGH) is the 'HIGH' region element.

This sequence belongs to the class-I aminoacyl-tRNA synthetase family. In terms of assembly, monomer.

The protein localises to the cytoplasm. The enzyme catalyses tRNA(Arg) + L-arginine + ATP = L-arginyl-tRNA(Arg) + AMP + diphosphate. The chain is Arginine--tRNA ligase from Staphylococcus epidermidis (strain ATCC 35984 / DSM 28319 / BCRC 17069 / CCUG 31568 / BM 3577 / RP62A).